Here is a 221-residue protein sequence, read N- to C-terminus: Translation initiation factor 6 (221 aa).

It belongs to the eIF-6 family.

Functionally, binds to the 50S ribosomal subunit and prevents its association with the 30S ribosomal subunit to form the 70S initiation complex. This is Translation initiation factor 6 from Methanopyrus kandleri (strain AV19 / DSM 6324 / JCM 9639 / NBRC 100938).